A 63-amino-acid polypeptide reads, in one-letter code: uncharacterized protein (63 aa).

Residues 20–40 traverse the membrane as a helical segment; sequence IVLLISFIFFFGRFIYSSVGA.

It localises to the membrane. This is an uncharacterized protein from Escherichia coli O157:H7.